Here is a 720-residue protein sequence, read N- to C-terminus: Asp/Glu-specific dipeptidyl-peptidase (720 aa).

A signal peptide spans 1–21; that stretch reads MKKRLLLPLFAALCLSQIAHA. Residues Cys69 and Cys86 are joined by a disulfide bond. Residues His85, Asp227, and Ser655 each act as charge relay system in the active site.

The protein belongs to the peptidase S46 family. In terms of assembly, homodimer.

It is found in the cell surface. Enzyme activity is completely blocked by diisopropyl-fluorophosphates, moderately by phenylmethylsulfonyl fluoride (PMSF) and 4-(2-methyl)benzenesulfonyl fluoride, and slightly by pepstatin in vitro. In terms of biological role, catalyzes the removal of dipeptides from the N-terminus of oligopeptides. Shows a strict specificity for acidic residues (Asp or Glu) in the P1 position, and has a hydrophobic residue preference at the P2 position. Preferentially cleaves the synthetic substrate Leu-Asp-methylcoumaryl-7-amide (Leu-Asp-MCA) as compared to Leu-Glu-MCA. Is involved in amino acid metabolism and bacterial growth of asaccharolytic P.gingivalis, that utilizes amino acids from extracellular proteinaceous nutrients as energy and carbon sources. This is Asp/Glu-specific dipeptidyl-peptidase from Porphyromonas gingivalis (strain ATCC 33277 / DSM 20709 / CIP 103683 / JCM 12257 / NCTC 11834 / 2561).